The chain runs to 1058 residues: Outer capsid protein VP4 (1058 aa).

This sequence belongs to the orthoreovirus lambda-2 protein family.

The protein resides in the virion. It catalyses the reaction a 5'-end diphospho-ribonucleoside in mRNA + GTP + H(+) = a 5'-end (5'-triphosphoguanosine)-ribonucleoside in mRNA + diphosphate. It carries out the reaction a 5'-end (5'-triphosphoguanosine)-ribonucleoside in mRNA + S-adenosyl-L-methionine = a 5'-end (N(7)-methyl 5'-triphosphoguanosine)-ribonucleoside in mRNA + S-adenosyl-L-homocysteine. In terms of biological role, outer capsid protein involved in mRNA capping. Catalyzes the last 3 enzymatic activities for formation of the 5' cap structure on the viral plus-strand transcripts, namely the RNA guanylyltransferase, RNA-7N- and RNA-2'O-methyltransferase activities. This chain is Outer capsid protein VP4 (S4), found in Lymantria dispar cypovirus 1 (isolate Rao) (LdCPV-1).